Reading from the N-terminus, the 51-residue chain is Large ribosomal subunit protein bL33 (51 aa).

The protein belongs to the bacterial ribosomal protein bL33 family.

The polypeptide is Large ribosomal subunit protein bL33 (Nitrosococcus oceani (strain ATCC 19707 / BCRC 17464 / JCM 30415 / NCIMB 11848 / C-107)).